The primary structure comprises 447 residues: Cysteine--tRNA ligase (447 aa).

Cys28 serves as a coordination point for Zn(2+). The 'HIGH' region motif lies at 30–40; that stretch reads PTVYNYIHIGN. The Zn(2+) site is built by Cys211, His236, and Glu240. Residues 268–272 carry the 'KMSKS' region motif; sequence KMSKS. ATP is bound at residue Lys271.

The protein belongs to the class-I aminoacyl-tRNA synthetase family. Monomer. It depends on Zn(2+) as a cofactor.

Its subcellular location is the cytoplasm. It catalyses the reaction tRNA(Cys) + L-cysteine + ATP = L-cysteinyl-tRNA(Cys) + AMP + diphosphate. The chain is Cysteine--tRNA ligase from Streptococcus pyogenes serotype M28 (strain MGAS6180).